Here is an 899-residue protein sequence, read N- to C-terminus: Probable dipeptidyl-aminopeptidase B (899 aa).

2 disordered regions span residues 1–37 (MARK…SDGS) and 51–84 (KITR…TENS). Over 1-91 (MARKDKDNGP…ENSKRNRGSR (91 aa)) the chain is Cytoplasmic. Residues 22–37 (SSASFSSTDSLSSDGS) are compositionally biased toward low complexity. Basic and acidic residues predominate over residues 61-74 (NPYRDDDVELERGD). Residues 92-112 (LIWVVGLLCLGGWILAFVLFW) traverse the membrane as a helical; Signal-anchor for type II membrane protein segment. Residues 113 to 899 (GRRNSELSSS…QQGNSVLPVT (787 aa)) are Vacuolar-facing. N-linked (GlcNAc...) asparagine glycosylation is found at N149, N194, N347, N409, N513, N638, and N643. Catalysis depends on S752, which acts as the Charge relay system. A glycan (N-linked (GlcNAc...) asparagine) is linked at N811. Residues D829 and H862 each act as charge relay system in the active site.

This sequence belongs to the peptidase S9B family.

It localises to the vacuole membrane. It catalyses the reaction Release of an N-terminal dipeptide, Xaa-Yaa-|-Zaa-, from a polypeptide, preferentially when Yaa is Pro, provided Zaa is neither Pro nor hydroxyproline.. In terms of biological role, type IV dipeptidyl-peptidase which removes N-terminal dipeptides sequentially from polypeptides having unsubstituted N-termini provided that the penultimate residue is proline. The polypeptide is Probable dipeptidyl-aminopeptidase B (dapB) (Talaromyces marneffei (strain ATCC 18224 / CBS 334.59 / QM 7333) (Penicillium marneffei)).